A 613-amino-acid polypeptide reads, in one-letter code: Vitamin B12 transporter BtuB (613 aa).

A signal peptide spans 1–22; sequence MQKSLLAIAMASLLTPISYLHA. The TonB box signature appears at 29 to 36; sequence DTVVVTAN. One can recognise a TBDR plug domain in the interval 41–154; the sequence is VESSVLASIS…IGGVIHIKTI (114 aa). One can recognise a TBDR beta-barrel domain in the interval 159 to 613; it reads QTKHDANLGY…NWFATVNYRF (455 aa). A TonB C-terminal box motif is present at residues 591 to 613; it reads HSSGGKYYVGEGRNWFATVNYRF.

It belongs to the TonB-dependent receptor family. BtuB (TC 1.B.14.3.1) subfamily.

It is found in the cell outer membrane. Functionally, involved in the active translocation of vitamin B12 (cyanocobalamin) across the outer membrane to the periplasmic space. It derives its energy for transport by interacting with the trans-periplasmic membrane protein TonB. This is Vitamin B12 transporter BtuB from Vibrio vulnificus (strain YJ016).